The following is a 391-amino-acid chain: Digeranylgeranylglycerophospholipid reductase (391 aa).

Residues G18, E37, C48, A49, A51, R98, A122, D279, G291, and I292 each contribute to the FAD site.

This sequence belongs to the geranylgeranyl reductase family. DGGGPL reductase subfamily. FAD serves as cofactor.

The catalysed reaction is a 2,3-bis-O-phytanyl-sn-glycerol 1-phospholipid + 8 A = a 2,3-bis-O-(geranylgeranyl)-sn-glycerol 1-phospholipid + 8 AH2. It carries out the reaction 2,3-bis-O-(phytanyl)-sn-glycerol 1-phosphate + 8 A = 2,3-bis-O-(geranylgeranyl)-sn-glycerol 1-phosphate + 8 AH2. It catalyses the reaction CDP-2,3-bis-O-(geranylgeranyl)-sn-glycerol + 8 AH2 = CDP-2,3-bis-O-(phytanyl)-sn-glycerol + 8 A. The enzyme catalyses archaetidylserine + 8 AH2 = 2,3-bis-O-phytanyl-sn-glycero-3-phospho-L-serine + 8 A. The protein operates within membrane lipid metabolism; glycerophospholipid metabolism. In terms of biological role, is involved in the reduction of 2,3-digeranylgeranylglycerophospholipids (unsaturated archaeols) into 2,3-diphytanylglycerophospholipids (saturated archaeols) in the biosynthesis of archaeal membrane lipids. Catalyzes the formation of archaetidic acid (2,3-di-O-phytanyl-sn-glyceryl phosphate) from 2,3-di-O-geranylgeranylglyceryl phosphate (DGGGP) via the hydrogenation of each double bond of the isoprenoid chains. Is also probably able to reduce double bonds of geranyl groups in CDP-2,3-bis-O-(geranylgeranyl)-sn-glycerol and archaetidylserine, thus acting at various stages in the biosynthesis of archaeal membrane lipids. This Methanocaldococcus jannaschii (strain ATCC 43067 / DSM 2661 / JAL-1 / JCM 10045 / NBRC 100440) (Methanococcus jannaschii) protein is Digeranylgeranylglycerophospholipid reductase.